A 424-amino-acid chain; its full sequence is Histidine--tRNA ligase (424 aa).

It belongs to the class-II aminoacyl-tRNA synthetase family. As to quaternary structure, homodimer.

It localises to the cytoplasm. It carries out the reaction tRNA(His) + L-histidine + ATP = L-histidyl-tRNA(His) + AMP + diphosphate + H(+). This chain is Histidine--tRNA ligase, found in Shewanella pealeana (strain ATCC 700345 / ANG-SQ1).